The chain runs to 565 residues: Adenine deaminase (565 aa).

Belongs to the metallo-dependent hydrolases superfamily. Adenine deaminase family. Mn(2+) is required as a cofactor.

It catalyses the reaction adenine + H2O + H(+) = hypoxanthine + NH4(+). The sequence is that of Adenine deaminase from Sinorhizobium fredii (strain NBRC 101917 / NGR234).